We begin with the raw amino-acid sequence, 413 residues long: Lamin tail domain-containing protein 1 (413 aa).

Disordered stretches follow at residues 1-25 (MMKE…VQDG) and 102-128 (HKDS…SDVD). Polar residues predominate over residues 107–128 (LGKQSTSSMVPRRQPQSSSDVD). An LTD domain is found at 169–287 (EVGQFTSSSL…EAIAWYTPIH (119 aa)). The tract at residues 356 to 413 (LPNKSPWCRNPNTSPHPYSSLIDSHDSDISESSLDTQLKPQPTKPKPDPGTKKKKAKS) is disordered. Over residues 385 to 396 (SESSLDTQLKPQ) the composition is skewed to low complexity.

It belongs to the intermediate filament family.

The polypeptide is Lamin tail domain-containing protein 1 (Lmntd1) (Mus musculus (Mouse)).